Consider the following 51-residue polypeptide: MVAYWRQAGLSYIRYSQICAKVVRDALKTEFKANAKKTSGNSVKIVKVKKE.

Lys-21 bears the N6-acetyllysine mark.

The protein belongs to the eukaryotic ATPase epsilon family. As to quaternary structure, F-type ATPases have 2 components, CF(1) - the catalytic core - and CF(0) - the membrane proton channel. CF(1) has five subunits: alpha(3), beta(3), gamma(1), delta(1), epsilon(1). CF(0) seems to have nine subunits: a, b, c, d, e, f, g, F6 and 8 (or A6L).

Its subcellular location is the mitochondrion inner membrane. Mitochondrial membrane ATP synthase (F(1)F(0) ATP synthase or Complex V) produces ATP from ADP in the presence of a proton gradient across the membrane which is generated by electron transport complexes of the respiratory chain. F-type ATPases consist of two structural domains, F(1) - containing the extramembraneous catalytic core, and F(0) - containing the membrane proton channel, linked together by a central stalk and a peripheral stalk. During catalysis, ATP synthesis in the catalytic domain of F(1) is coupled via a rotary mechanism of the central stalk subunits to proton translocation. Part of the complex F(1) domain and of the central stalk which is part of the complex rotary element. Rotation of the central stalk against the surrounding alpha(3)beta(3) subunits leads to hydrolysis of ATP in three separate catalytic sites on the beta subunits. In Homo sapiens (Human), this protein is ATP synthase subunit epsilon-like protein, mitochondrial.